Consider the following 223-residue polypeptide: MIF4G domain-containing protein B (223 aa).

In terms of domain architecture, MIF4G spans 9 to 206; the sequence is DYKIQGFDAD…LEMIEYRAAG (198 aa).

Belongs to the MIF4GD family. As to quaternary structure, interacts with eif4g1, eif4g2 and slbp; probably tethered by SLBP to the 3'-end of mRNAs ending with the histone stem-loop, it also interacts with eif4g1 which is bound to their 5'-end.

The protein localises to the cytoplasm. It is found in the nucleus. Its function is as follows. Functions in replication-dependent translation of histone mRNAs which differ from other eukaryotic mRNAs in that they do not end with a poly-A tail but a stem-loop. May participate in circularizing those mRNAs specifically enhancing their translation. This chain is MIF4G domain-containing protein B (mif4gd-b), found in Xenopus laevis (African clawed frog).